A 262-amino-acid polypeptide reads, in one-letter code: Hemin import ATP-binding protein HmuV (262 aa).

In terms of domain architecture, ABC transporter spans 2-241 (IRASDISVRL…ETMEAVFGCR (240 aa)). Position 34–41 (34–41 (GPNGSGKT)) interacts with ATP.

The protein belongs to the ABC transporter superfamily. Heme (hemin) importer (TC 3.A.1.14.5) family. The complex is composed of two ATP-binding proteins (HmuV), two transmembrane proteins (HmuU) and a solute-binding protein (HmuT).

The protein resides in the cell inner membrane. Functionally, part of the ABC transporter complex HmuTUV involved in hemin import. Responsible for energy coupling to the transport system. This chain is Hemin import ATP-binding protein HmuV, found in Rhizobium meliloti (strain 1021) (Ensifer meliloti).